The sequence spans 252 residues: MRILLSNDDGYLAPGLAALYEALKPIADVTVMAPEQNCSGASNSLTLSRPLSVLRSANGFYYVNGTPTDSVHIALTGMLDHRPDLVVSGINNGQNMGEDTLYSGTVAAATEGIMFGVPAIAFSLVDKDWVHLEDAVRVSAEIVAHYLEQPLPGHPLLNVNIPNLPYDQLGDWQITRLGKRHPSQPVIRQTNPRGEPIYWIGPAGSARDASEGTDFHAVANGHVSITPLQLDLTHTQMLPAARDWARAGSGAS.

Residues D8, D9, S39, and N91 each contribute to the a divalent metal cation site.

The protein belongs to the SurE nucleotidase family. Requires a divalent metal cation as cofactor.

The protein resides in the cytoplasm. The enzyme catalyses a ribonucleoside 5'-phosphate + H2O = a ribonucleoside + phosphate. Nucleotidase that shows phosphatase activity on nucleoside 5'-monophosphates. This chain is 5'-nucleotidase SurE, found in Paraburkholderia xenovorans (strain LB400).